A 577-amino-acid polypeptide reads, in one-letter code: Arginine--tRNA ligase (577 aa).

A 'HIGH' region motif is present at residues 122-132; it reads PNVAKEMHVGH.

This sequence belongs to the class-I aminoacyl-tRNA synthetase family. In terms of assembly, monomer.

The protein resides in the cytoplasm. The enzyme catalyses tRNA(Arg) + L-arginine + ATP = L-arginyl-tRNA(Arg) + AMP + diphosphate. This Escherichia fergusonii (strain ATCC 35469 / DSM 13698 / CCUG 18766 / IAM 14443 / JCM 21226 / LMG 7866 / NBRC 102419 / NCTC 12128 / CDC 0568-73) protein is Arginine--tRNA ligase.